Consider the following 413-residue polypeptide: FAD-dependent monooxygenase vrtH (413 aa).

A signal peptide spans 1–23 (MQRANHTRPVLIIGAGLSGLAIG). N5 carries an N-linked (GlcNAc...) asparagine glycan. 2 residues coordinate FAD: E37 and A48. N-linked (GlcNAc...) asparagine glycosylation is present at N94. Residue R120 participates in FAD binding. N-linked (GlcNAc...) asparagine glycosylation is present at N232. D327 and G340 together coordinate FAD.

It belongs to the paxM FAD-dependent monooxygenase family. Requires FAD as cofactor.

It functions in the pathway secondary metabolite biosynthesis; terpenoid biosynthesis. Its function is as follows. FAD-dependent monooxygenase; part of the gene cluster that mediates the biosynthesis of viridicatumtoxin, a tetracycline-like fungal meroterpenoid with a unique, fused spirobicyclic ring system. The first step of the pathway is the production of the malonamoyl-CoA starter unit for the polyketide synthase vrtA. The aldolase vrtJ may be involved in the synthesis of the malonamate substrate for malonamoyl-CoA synthetase vrtB. The polyketide synthase vrtA then may utilize the malonamoyl-CoA starter unit, followed by sequential condensation of eight malonyl-CoA units to form the polyketide backbone. The cyclization of the last ring could be mediated by the lactamase-like protein vrtG. The proposed post-PKS tailoring steps are a hydroxylation at C5 catalyzed the cytochrome P450 monooxygenase vrtE, a hydroxylation at C12a catalyzed by VrtH and/or VrtI, and an O-methylation by the O-methyltransferase vrtF. VrtC is then proposed to catalyze the transfer of a geranyl group synthesized by vrtD to the aromatic C ring of the tetracyclic polyketide intermediate of viridicatumtoxin to yield previridicatumtoxin. Finally, the cytochrome P450 monooxygenase vrtK catalyzes the spirocyclization of the geranyl moiety of previridicatumtoxin to afford viridicatumtoxin. The sequence is that of FAD-dependent monooxygenase vrtH from Penicillium aethiopicum.